The chain runs to 73 residues: Protein RALF-like 10 (73 aa).

Positions 1-17 (MKALVICLLVIFAAVIA) are cleaved as a signal peptide. 2 disulfide bridges follow: cysteine 35-cysteine 44 and cysteine 64-cysteine 70.

Belongs to the plant rapid alkalinization factor (RALF) family. As to expression, expressed in flowers.

It localises to the secreted. In terms of biological role, cell signaling peptide that may regulate plant stress, growth, and development. Mediates a rapid alkalinization of extracellular space by mediating a transient increase in the cytoplasmic Ca(2+) concentration leading to a calcium-dependent signaling events through a cell surface receptor and a concomitant activation of some intracellular mitogen-activated protein kinases. This chain is Protein RALF-like 10 (RALFL10), found in Arabidopsis thaliana (Mouse-ear cress).